Consider the following 461-residue polypeptide: Phosphatidate cytidylyltransferase 1 (461 aa).

Residues 1–67 (MLELRHRGSC…IPEIPPSSDR (67 aa)) are disordered. Position 7 is an omega-N-methylarginine (arginine 7). The span at 20-56 (PHREGEAAGGDHETESTSDKETDIDDRYGDLDSRTDS) shows a compositional bias: basic and acidic residues. 2 positions are modified to phosphoserine: serine 35 and serine 37. Transmembrane regions (helical) follow at residues 96–116 (MISL…LLVL), 149–169 (FLLC…FATF), 183–203 (HRFI…LSLV), 230–250 (LVIQ…SSVI), 279–299 (GFIG…YVLS), and 357–377 (IALS…ASGF).

The protein belongs to the CDS family. Homodimer. Interacts with FOS; this interaction may enhance catalytic activity. Mg(2+) serves as cofactor. In terms of tissue distribution, expressed in adult tissues such as placenta, brain, small intestine, ovary, testis and prostate. Highly expressed in fetal kidney, lung and brain. Lower level in fetal liver.

It localises to the endoplasmic reticulum membrane. It catalyses the reaction a 1,2-diacyl-sn-glycero-3-phosphate + CTP + H(+) = a CDP-1,2-diacyl-sn-glycerol + diphosphate. It carries out the reaction 1-octadecanoyl-2-(5Z,8Z,11Z,14Z-eicosatetraenoyl)-sn-glycero-3-phosphate + CTP + H(+) = 1-octadecanoyl-2-(5Z,8Z,11Z,14Z-eicosatetraenoyl)-sn-glycero-3-cytidine-5'-diphosphate + diphosphate. The catalysed reaction is 1-octadecanoyl-2-(9Z,12Z-octadecadienoyl)-sn-glycero-3-phosphate + CTP + H(+) = 1-octadecanoyl-2-(9Z,12Z-octadecadienoyl)-sn-glycero-3-cytidine-5'-diphosphate + diphosphate. The enzyme catalyses 1-hexadecanoyl-2-(5Z,8Z,11Z,14Z-eicosatetraenoyl)-sn-glycero-3-phosphate + CTP + H(+) = 1-hexadecanoyl-2-(5Z,8Z,11Z,14Z-eicosatetraenoyl)-sn-glycero-3-cytidine-5'-diphosphate + diphosphate. It catalyses the reaction 1,2-di-(5Z,8Z,11Z,14Z)-eicosatetraenoyl-sn-glycero-3-phosphate + CTP + H(+) = 1,2-di-(5Z,8Z,11Z,14Z-eicosatetraenoyl)-sn-glycero-3-cytidine-5'-diphosphate + diphosphate. It carries out the reaction 1-octadecanoyl-2-(9Z-octadecenoyl)-sn-glycero-3-phosphate + CTP + H(+) = 1-octadecanoyl-2-(9Z-octadecenoyl)-sn-glycero-3-cytidine-5'-diphosphate + diphosphate. The catalysed reaction is 1-octadecanoyl-2-(4Z,7Z,10Z,13Z,16Z,19Z-docosahexaenoyl)-sn-glycero-3-phosphate + CTP + H(+) = 1-octadecanoyl-2-(4Z,7Z,10Z,13Z,16Z,19Z-docosahexaenoyl)-sn-glycero-3-cytidine-5'-diphosphate + diphosphate. The enzyme catalyses 1,2-di-(9Z,12Z-octadecadienoyl)-sn-glycero-3-phosphate + CTP + H(+) = 1,2-di-(9Z,12Z-octadecadienoyl)-sn-glycero-3-cytidine-5'-diphosphate + diphosphate. It catalyses the reaction 1,2-di-(9Z-octadecenoyl)-sn-glycero-3-phosphate + CTP + H(+) = 1,2-di-(9Z-octadecenoyl)-sn-glycero-3-cytidine-5'-diphosphate + diphosphate. The protein operates within phospholipid metabolism; CDP-diacylglycerol biosynthesis; CDP-diacylglycerol from sn-glycerol 3-phosphate: step 3/3. With respect to regulation, inhibited by its anionic phospholipid end products, with phosphatidylinositol-(4,5)- bisphosphate showing the strongest inhibition. In terms of biological role, catalyzes the conversion of phosphatidic acid (PA) to CDP-diacylglycerol (CDP-DAG), an essential intermediate in the synthesis of phosphatidylglycerol, cardiolipin and phosphatidylinositol. Exhibits almost no acyl chain preference for PA, showing no discrimination for the sn-1/sn-2 acyl chain composition of PAs. Plays an important role in regulating the growth of lipid droplets which are storage organelles at the center of lipid and energy homeostasis. Positively regulates the differentiation and development of adipocytes. This is Phosphatidate cytidylyltransferase 1 from Homo sapiens (Human).